The following is a 368-amino-acid chain: MLRNKDRSSNKGNLAVTAVALQDHLLHDLQLGHLSVADPCKIKARKKEKKSKSLKRDATAIIDTGLRKSTEGPNMEDPEKEYVLDPTPPPLTLAQKLGLLPPPPLPLSSDEWERVKQRSLLQGDSIQPCPICKEEFELHPQVLLSCSHVFHRACLQAFEKFTNKKTCPLCRKNQYQTRVIHDGARLFRVKCATRIQAYWRGYIVRKWYRNLRKIIPPSDAKLRRKFFEEKFTEISHRILCSYNTNIDELFSEIDVCLAVNRSILQQLDERCGQIITKEDWEKIQAQAAHHEIYECSICLTPLSFHGDGRQAAIGTSSQRPRETVLLSCAHLFHNACLLALEEFSLGDNAPFHVCPLCRSCYQKKIVEC.

Positions 45–82 are disordered; it reads RKKEKKSKSLKRDATAIIDTGLRKSTEGPNMEDPEKEY. The segment at 129–171 adopts an RING-type 1; atypical zinc-finger fold; sequence CPICKEEFELHPQVLLSCSHVFHRACLQAFEKFTNKKTCPLCR. The 30-residue stretch at 188–217 folds into the IQ domain; that stretch reads RVKCATRIQAYWRGYIVRKWYRNLRKIIPP. An RING-type 2; atypical zinc finger spans residues 295 to 358; that stretch reads CSICLTPLSF…APFHVCPLCR (64 aa).

It is found in the cytoplasm. Its function is as follows. May play a role in sperm formation. The sequence is that of RING finger protein 32 (Rnf32) from Mus musculus (Mouse).